The following is a 371-amino-acid chain: Anhydro-N-acetylmuramic acid kinase (371 aa).

15 to 22 (GTSLDGVD) is an ATP binding site.

It belongs to the anhydro-N-acetylmuramic acid kinase family.

The catalysed reaction is 1,6-anhydro-N-acetyl-beta-muramate + ATP + H2O = N-acetyl-D-muramate 6-phosphate + ADP + H(+). It participates in amino-sugar metabolism; 1,6-anhydro-N-acetylmuramate degradation. Its pathway is cell wall biogenesis; peptidoglycan recycling. Functionally, catalyzes the specific phosphorylation of 1,6-anhydro-N-acetylmuramic acid (anhMurNAc) with the simultaneous cleavage of the 1,6-anhydro ring, generating MurNAc-6-P. Is required for the utilization of anhMurNAc either imported from the medium or derived from its own cell wall murein, and thus plays a role in cell wall recycling. This is Anhydro-N-acetylmuramic acid kinase from Cereibacter sphaeroides (strain ATCC 17023 / DSM 158 / JCM 6121 / CCUG 31486 / LMG 2827 / NBRC 12203 / NCIMB 8253 / ATH 2.4.1.) (Rhodobacter sphaeroides).